The following is a 318-amino-acid chain: Glutathione synthetase (318 aa).

The ATP-grasp domain occupies 129 to 314; that stretch reads KLAITEFPDL…VPEMFAVALE (186 aa). Residue 155-211 participates in ATP binding; sequence HAAQGDVIVKPLDGMGGTGIFRLQRSEPNLNAILETLTDNGTRTIMAQRYIPEIVKG. Mg(2+) contacts are provided by Glu-285 and Asn-287.

The protein belongs to the prokaryotic GSH synthase family. Mg(2+) serves as cofactor. It depends on Mn(2+) as a cofactor.

The catalysed reaction is gamma-L-glutamyl-L-cysteine + glycine + ATP = glutathione + ADP + phosphate + H(+). It participates in sulfur metabolism; glutathione biosynthesis; glutathione from L-cysteine and L-glutamate: step 2/2. In Bordetella bronchiseptica (strain ATCC BAA-588 / NCTC 13252 / RB50) (Alcaligenes bronchisepticus), this protein is Glutathione synthetase.